The following is a 501-amino-acid chain: Lysine--tRNA ligase (501 aa).

Mg(2+) contacts are provided by glutamate 402 and glutamate 409.

The protein belongs to the class-II aminoacyl-tRNA synthetase family. In terms of assembly, homodimer. The cofactor is Mg(2+).

The protein resides in the cytoplasm. The catalysed reaction is tRNA(Lys) + L-lysine + ATP = L-lysyl-tRNA(Lys) + AMP + diphosphate. The protein is Lysine--tRNA ligase of Helicobacter pylori (strain P12).